Consider the following 192-residue polypeptide: Crossover junction endodeoxyribonuclease RuvC (192 aa).

Active-site residues include D8, E67, and D139. Mg(2+)-binding residues include D8, E67, and D139.

The protein belongs to the RuvC family. Homodimer which binds Holliday junction (HJ) DNA. The HJ becomes 2-fold symmetrical on binding to RuvC with unstacked arms; it has a different conformation from HJ DNA in complex with RuvA. In the full resolvosome a probable DNA-RuvA(4)-RuvB(12)-RuvC(2) complex forms which resolves the HJ. Mg(2+) serves as cofactor.

Its subcellular location is the cytoplasm. The enzyme catalyses Endonucleolytic cleavage at a junction such as a reciprocal single-stranded crossover between two homologous DNA duplexes (Holliday junction).. Its function is as follows. The RuvA-RuvB-RuvC complex processes Holliday junction (HJ) DNA during genetic recombination and DNA repair. Endonuclease that resolves HJ intermediates. Cleaves cruciform DNA by making single-stranded nicks across the HJ at symmetrical positions within the homologous arms, yielding a 5'-phosphate and a 3'-hydroxyl group; requires a central core of homology in the junction. The consensus cleavage sequence is 5'-(A/T)TT(C/G)-3'. Cleavage occurs on the 3'-side of the TT dinucleotide at the point of strand exchange. HJ branch migration catalyzed by RuvA-RuvB allows RuvC to scan DNA until it finds its consensus sequence, where it cleaves and resolves the cruciform DNA. This Actinobacillus pleuropneumoniae serotype 5b (strain L20) protein is Crossover junction endodeoxyribonuclease RuvC.